A 447-amino-acid polypeptide reads, in one-letter code: NADH-quinone oxidoreductase subunit F (447 aa).

61-70 (GRGGAGFSTG) lines the NAD(+) pocket. An FMN-binding site is contributed by 174–221 (GAGRYICGEETALINSLEGRRANPRAKPPFPAVFGLWGKPTCVNNVET). Cys-352, Cys-355, Cys-358, and Cys-399 together coordinate [4Fe-4S] cluster.

This sequence belongs to the complex I 51 kDa subunit family. As to quaternary structure, composed of 13 different subunits. Subunits NuoCD, E, F, and G constitute the peripheral sector of the complex. [4Fe-4S] cluster serves as cofactor. It depends on FMN as a cofactor.

It catalyses the reaction a quinone + NADH + 5 H(+)(in) = a quinol + NAD(+) + 4 H(+)(out). Its function is as follows. NDH-1 shuttles electrons from NADH, via FMN and iron-sulfur (Fe-S) centers, to quinones in the respiratory chain. Couples the redox reaction to proton translocation (for every two electrons transferred, four hydrogen ions are translocated across the cytoplasmic membrane), and thus conserves the redox energy in a proton gradient. The protein is NADH-quinone oxidoreductase subunit F (nuoF) of Buchnera aphidicola subsp. Schizaphis graminum (strain Sg).